Reading from the N-terminus, the 729-residue chain is Golgin subfamily A member 5 (729 aa).

The residue at position 2 (Ser-2) is an N-acetylserine. Residues 2–696 are Cytoplasmic-facing; that stretch reads SWFADLAGRA…IFLRRYPIAR (695 aa). Arg-27 and Arg-89 each carry dimethylated arginine. Disordered stretches follow at residues 89 to 222 and 626 to 645; these read RTVG…SQEL and SASS…VDSG. Ser-116 bears the Phosphoserine mark. Residues 134 to 146 are compositionally biased toward basic and acidic residues; it reads PTGRVEVKKEKGR. The segment covering 148–167 has biased composition (low complexity); sequence PVSPSSPSGVSSVNTSVTTT. Composition is skewed to polar residues over residues 175-186 and 626-638; these read GSQSPGVNSSDS and SASS…SAIN. Residues 215–629 are a coiled coil; the sequence is GSSRSQELSN…LEQQVHSASS (415 aa). The helical; Anchor for type IV membrane protein transmembrane segment at 697-717 threads the bilayer; it reads VFVIIYMALLHLWVMIVLLTY. At 718 to 729 the chain is on the lumenal side; it reads SPEMHHDQPYGK.

In terms of assembly, homodimer. Interacts with RAB1A that has been activated by GTP-binding. Interacts with isoform CASP of CUX1. Highly phosphorylated during mitosis. Phosphorylation is barely detectable during interphase.

Its subcellular location is the golgi apparatus membrane. In terms of biological role, involved in maintaining Golgi structure. Stimulates the formation of Golgi stacks and ribbons. Involved in intra-Golgi retrograde transport. The sequence is that of Golgin subfamily A member 5 (Golga5) from Mus musculus (Mouse).